A 121-amino-acid chain; its full sequence is uncharacterized protein (121 aa).

Positions Ser-101 to Ala-121 are disordered. Residues Glu-111 to Ala-121 are compositionally biased toward basic and acidic residues.

The protein localises to the mitochondrion. This is an uncharacterized protein from Arabidopsis thaliana (Mouse-ear cress).